Here is a 362-residue protein sequence, read N- to C-terminus: Probable dual-specificity RNA methyltransferase RlmN (362 aa).

Glutamate 99 serves as the catalytic Proton acceptor. The Radical SAM core domain maps to 105–341 (SPDRHTVCVS…VTVRKSQGAS (237 aa)). The cysteines at positions 112 and 346 are disulfide-linked. Cysteine 119, cysteine 123, and cysteine 126 together coordinate [4Fe-4S] cluster. S-adenosyl-L-methionine-binding positions include 171 to 172 (GE), serine 204, 227 to 229 (SLH), and asparagine 303. Cysteine 346 serves as the catalytic S-methylcysteine intermediate.

It belongs to the radical SAM superfamily. RlmN family. [4Fe-4S] cluster serves as cofactor.

The protein resides in the cytoplasm. It carries out the reaction adenosine(2503) in 23S rRNA + 2 reduced [2Fe-2S]-[ferredoxin] + 2 S-adenosyl-L-methionine = 2-methyladenosine(2503) in 23S rRNA + 5'-deoxyadenosine + L-methionine + 2 oxidized [2Fe-2S]-[ferredoxin] + S-adenosyl-L-homocysteine. The catalysed reaction is adenosine(37) in tRNA + 2 reduced [2Fe-2S]-[ferredoxin] + 2 S-adenosyl-L-methionine = 2-methyladenosine(37) in tRNA + 5'-deoxyadenosine + L-methionine + 2 oxidized [2Fe-2S]-[ferredoxin] + S-adenosyl-L-homocysteine. Specifically methylates position 2 of adenine 2503 in 23S rRNA and position 2 of adenine 37 in tRNAs. The polypeptide is Probable dual-specificity RNA methyltransferase RlmN (Chlorobium phaeobacteroides (strain BS1)).